The chain runs to 893 residues: Translation initiation factor IF-2 (893 aa).

The interval 49 to 303 is disordered; the sequence is LNREAGSGPD…KGSSLQQGFQ (255 aa). Residues 68-82 are compositionally biased toward polar residues; the sequence is STLNIPGTGGKSKSV. Composition is skewed to basic and acidic residues over residues 93-159 and 166-216; these read VKRD…KDKV and DMTK…EENK. The segment covering 254 to 269 has biased composition (basic residues); the sequence is GRGRNAKAARPAKKGN. The segment covering 270–283 has biased composition (basic and acidic residues); that stretch reads KHAESKADREEARA. The tr-type G domain maps to 392–561; that stretch reads PRAPVVTIMG…LLQAEVLELK (170 aa). Positions 401-408 are G1; the sequence is GHVDHGKT. 401–408 contributes to the GTP binding site; sequence GHVDHGKT. The tract at residues 426-430 is G2; sequence GITQH. A G3 region spans residues 447 to 450; the sequence is DTPG. GTP is bound by residues 447–451 and 501–504; these read DTPGH and NKID. Residues 501-504 are G4; that stretch reads NKID. Positions 537 to 539 are G5; it reads SAK.

The protein belongs to the TRAFAC class translation factor GTPase superfamily. Classic translation factor GTPase family. IF-2 subfamily.

The protein localises to the cytoplasm. Its function is as follows. One of the essential components for the initiation of protein synthesis. Protects formylmethionyl-tRNA from spontaneous hydrolysis and promotes its binding to the 30S ribosomal subunits. Also involved in the hydrolysis of GTP during the formation of the 70S ribosomal complex. This chain is Translation initiation factor IF-2, found in Salmonella arizonae (strain ATCC BAA-731 / CDC346-86 / RSK2980).